The primary structure comprises 269 residues: Aquaporin-1 (269 aa).

The Cytoplasmic portion of the chain corresponds to 1–11; sequence MASEIKKKLFW. A helical membrane pass occupies residues 12–29; the sequence is RAVVAEFLAMTLFVFISI. Topologically, residues 30-46 are extracellular; that stretch reads GSALGFNYPLERNQTLV. A helical transmembrane segment spans residues 47–65; the sequence is QDNVKVSLAFGLSIATLAQ. Topologically, residues 66–68 are cytoplasmic; that stretch reads SVG. An intramembrane segment occupies 69–82; it reads HISGAHLNPAVTLG. The short motif at 76-78 is the NPA 1 element; sequence NPA. Residues 83–90 lie on the Cytoplasmic side of the membrane; it reads LLLSCQIS. A helical membrane pass occupies residues 91–109; the sequence is ILRAVMYIIAQCVGAIVAT. The Extracellular segment spans residues 110–133; it reads AILSGITSSLVDNSLGRNDLAHGV. A helical membrane pass occupies residues 134–153; it reads NSGQGLGIEIIGTLQLVLCV. Over 154-163 the chain is Cytoplasmic; sequence LATTDRRRRD. The helical transmembrane segment at 164–181 threads the bilayer; that stretch reads LGGSAPLAIGLSVALGHL. At 182–186 the chain is on the extracellular side; that stretch reads LAIDY. An intramembrane segment occupies 187–199; it reads TGCGINPARSFGS. The NPA 2 signature appears at 192–194; sequence NPA. The Extracellular portion of the chain corresponds to 200–206; sequence AVLTRNF. A glycan (N-linked (GlcNAc...) asparagine) is linked at N205. Residues 207–224 traverse the membrane as a helical segment; that stretch reads SNHWIFWVGPFIGGALAV. The Cytoplasmic segment spans residues 225–269; the sequence is LIYDFILAPRSSDFTDRMKVWTSGQVEEYDLDADDINSRVEMKPK. S247 carries the phosphoserine modification. A Phosphotyrosine modification is found at Y253. S262 is subject to Phosphoserine.

This sequence belongs to the MIP/aquaporin (TC 1.A.8) family. As to quaternary structure, homotetramer; each monomer provides an independent water pore. Component of the ankyrin-1 complex in the erythrocyte, composed of ANK1, RHCE, RHAG, SLC4A1, EPB42, GYPA, GYPB and AQP1. Interacts with EPHB2; involved in endolymph production in the inner ear. Identified in a complex with STOM. Interacts (via the N-terminal) with ANK1 (via ANK 1-5 repeats). Interacts (via the C-terminal) with EPB42. In terms of tissue distribution, detected in erythrocytes (at protein level). In the kidney, expressed on luminal and basal borders of proximal tubules and in the thin limb of Henle's loop (at protein level).

It is found in the cell membrane. It catalyses the reaction H2O(in) = H2O(out). The enzyme catalyses nitric oxide(out) = nitric oxide(in). The catalysed reaction is CO2(out) = CO2(in). It carries out the reaction glycerol(in) = glycerol(out). It catalyses the reaction H2O2(out) = H2O2(in). The enzyme catalyses K(+)(in) = K(+)(out). The catalysed reaction is Na(+)(in) = Na(+)(out). Forms a water channel that facilitates the transport of water across cell membranes, playing a crucial role in water homeostasis in various tissues. Could also be permeable to small solutes including hydrogen peroxide, glycerol and gases such as amonnia (NH3), nitric oxide (NO) and carbon dioxide (CO2). Recruited to the ankyrin-1 complex, a multiprotein complex of the erythrocyte membrane, it could be part of a CO2 metabolon, linking facilitated diffusion of CO2 across the membrane, anion exchange of Cl(-)/HCO3(-) and interconversion of dissolved CO2 and carbonic acid in the cytosol. In vitro, it shows non-selective gated cation channel activity and may be permeable to cations like K(+) and Na(+) in vivo. This Mus musculus (Mouse) protein is Aquaporin-1.